A 185-amino-acid polypeptide reads, in one-letter code: Translocon-associated protein subunit gamma (185 aa).

Met1 bears the N-acetylmethionine mark. At 1-27 (MAPKGGPKQQSEEDLLLQDFSRNLSAK) the chain is on the lumenal side. Ser11 bears the Phosphoserine mark. A helical transmembrane segment spans residues 28 to 48 (SSALFFGNAFIVSAIPIWLYW). Topologically, residues 49-54 (RIWHMD) are cytoplasmic. A helical membrane pass occupies residues 55–76 (LIQSAVLYSVMTLVSTYLVAFA). Over 77–135 (YKNVKFVLKHKVAQKREDAVSKEVTRKLSEADNRKMSRKEKDERILWKKNEVADYEATT) the chain is Lumenal. A Phosphoserine modification is found at Ser105. Residues 136–157 (FSIFYNNTLFLVLVIVASFFIL) traverse the membrane as a helical segment. The Cytoplasmic segment spans residues 158 to 163 (KNFNPT). A helical transmembrane segment spans residues 164–184 (VNYILSISASSGLIALLSTGS).

This sequence belongs to the TRAP-gamma family. Heterotetramer of TRAP-alpha, TRAP-beta, TRAP-delta and TRAP-gamma.

It is found in the endoplasmic reticulum membrane. TRAP proteins are part of a complex whose function is to bind calcium to the ER membrane and thereby regulate the retention of ER resident proteins. The protein is Translocon-associated protein subunit gamma (SSR3) of Bos taurus (Bovine).